Here is a 146-residue protein sequence, read N- to C-terminus: Deoxyuridine 5'-triphosphate nucleotidohydrolase (146 aa).

Substrate is bound by residues 66 to 68 (RSG), Asn79, and 83 to 85 (TID).

It belongs to the dUTPase family. The cofactor is Mg(2+).

It catalyses the reaction dUTP + H2O = dUMP + diphosphate + H(+). It functions in the pathway pyrimidine metabolism; dUMP biosynthesis; dUMP from dCTP (dUTP route): step 2/2. Functionally, this enzyme is involved in nucleotide metabolism: it produces dUMP, the immediate precursor of thymidine nucleotides and it decreases the intracellular concentration of dUTP so that uracil cannot be incorporated into DNA. The sequence is that of Deoxyuridine 5'-triphosphate nucleotidohydrolase from Citrifermentans bemidjiense (strain ATCC BAA-1014 / DSM 16622 / JCM 12645 / Bem) (Geobacter bemidjiensis).